The chain runs to 213 residues: MSDATSIKHPSGLTSGDFTAAEEPFALFAEWFAEASGSEPNDPNAMALATVDPDGLPDVRMVLMKGYDSHGFVFYSHIASQKGRELAANPKAALLFHWKSLRRQVRVRGAVTPVSDAEADAYFATRSKQSQIGAWASKQSQPLESRFAFEQAIAGVAAKHLIGAVPRPPGWSGWRVTPARFEFWHDRPFRLHDRIEFRRDTPDHPWTKTRLYP.

Residues 60–65 (RMVLMK), 75–76 (YS), Lys-82, and Gln-104 contribute to the FMN site. Lys-65 serves as a coordination point for substrate. Substrate contacts are provided by Tyr-122, Arg-126, and Ser-130. FMN-binding positions include 139-140 (QS) and Trp-184. 190 to 192 (RLH) is a binding site for substrate. FMN is bound at residue Arg-194.

The protein belongs to the pyridoxamine 5'-phosphate oxidase family. As to quaternary structure, homodimer. The cofactor is FMN.

The catalysed reaction is pyridoxamine 5'-phosphate + O2 + H2O = pyridoxal 5'-phosphate + H2O2 + NH4(+). It catalyses the reaction pyridoxine 5'-phosphate + O2 = pyridoxal 5'-phosphate + H2O2. The protein operates within cofactor metabolism; pyridoxal 5'-phosphate salvage; pyridoxal 5'-phosphate from pyridoxamine 5'-phosphate: step 1/1. It functions in the pathway cofactor metabolism; pyridoxal 5'-phosphate salvage; pyridoxal 5'-phosphate from pyridoxine 5'-phosphate: step 1/1. In terms of biological role, catalyzes the oxidation of either pyridoxine 5'-phosphate (PNP) or pyridoxamine 5'-phosphate (PMP) into pyridoxal 5'-phosphate (PLP). This Rhodopseudomonas palustris (strain BisB18) protein is Pyridoxine/pyridoxamine 5'-phosphate oxidase.